The following is a 283-amino-acid chain: MGGMGGGGLLDIYAMAWEHLRPGSSPVDWCEGNYLISSNIAEFVNTFSNFLFILLPPVLIMLFKEYGRFVTPGIHVIWVLLIVVGLSSMYFHATLSLIGQLLDELAILWVFMAAFSLFYPKRYYPKFVKNDRKTFSWLMLLSAIAATGLSWWKPIVNAFVLMFMSVPTMVMLYTELQRVSDQRVYRLGIRSTTVWAVAVFCWINDRIFCEAWSSINFPYLHGFWHIFIFIAAYTVLVLFAYFYVESELPQRQPLLKYWPKNEFEFGIPFISIRNPGKALRNTI.

Positions 28, 29, 31, 33, and 42 each coordinate Ca(2+). The next 2 helical transmembrane spans lie at Phe43–Phe63 and Phe69–Met89. His92 is a Zn(2+) binding site. A run of 4 helical transmembrane segments spans residues Ile98–Phe118, Thr134–Trp151, Pro154–Thr174, and Leu187–Cys209. The Zn(2+) site is built by His221 and His225. Residues Gly222–Phe242 traverse the membrane as a helical segment.

Belongs to the alkaline ceramidase family. It depends on Zn(2+) as a cofactor. Expressed in the central midgut of late embryos. In brain, it is present at the interhemispheric junction and in groups of cells in the central brain.

It localises to the membrane. It catalyses the reaction an N-acylsphing-4-enine + H2O = sphing-4-enine + a fatty acid. Hydrolyzes the sphingolipid ceramide into sphingosine and free fatty acid. The chain is Alkaline ceramidase (bwa) from Drosophila melanogaster (Fruit fly).